Consider the following 139-residue polypeptide: Class I hydrophobin 1 (139 aa).

The signal sequence occupies residues 1-21 (MFFRISTVFVVALAAFAAASP). 4 disulfides stabilise this stretch: C57–C118, C64–C112, C65–C98, and C119–C132.

It belongs to the fungal hydrophobin family. Self-assembles to form functional amyloid fibrils called rodlets. Self-assembly into fibrillar rodlets occurs spontaneously at hydrophobic:hydrophilic interfaces and the rodlets further associate laterally to form amphipathic monolayers.

The protein resides in the secreted. It localises to the cell wall. Aerial growth, conidiation, and dispersal of filamentous fungi in the environment rely upon a capability of their secreting small amphipathic proteins called hydrophobins (HPBs) with low sequence identity. Class I can self-assemble into an outermost layer of rodlet bundles on aerial cell surfaces, conferring cellular hydrophobicity that supports fungal growth, development and dispersal; whereas Class II form highly ordered films at water-air interfaces through intermolecular interactions but contribute nothing to the rodlet structure. Hah1 is a class I hydrophobin that is involved in aerial growth of mycelia, but does not play a role in pathogenesis. The protein is Class I hydrophobin 1 of Heterobasidion annosum (Root rot fungus).